We begin with the raw amino-acid sequence, 132 residues long: Small ribosomal subunit protein uS8 (132 aa).

Belongs to the universal ribosomal protein uS8 family. Part of the 30S ribosomal subunit. Contacts proteins S5 and S12.

Its function is as follows. One of the primary rRNA binding proteins, it binds directly to 16S rRNA central domain where it helps coordinate assembly of the platform of the 30S subunit. This is Small ribosomal subunit protein uS8 from Lactobacillus helveticus (strain DPC 4571).